We begin with the raw amino-acid sequence, 410 residues long: Digeranylgeranylglycerophospholipid reductase (410 aa).

FAD-binding residues include alanine 15, glutamate 34, valine 118, aspartate 286, glycine 298, and isoleucine 299. A 2,3-bis-O-(geranylgeranyl)-sn-glycerol 1-phospholipid-binding residues include lysine 343 and alanine 379.

The protein belongs to the geranylgeranyl reductase family. DGGGPL reductase subfamily. FAD is required as a cofactor.

The enzyme catalyses a 2,3-bis-O-phytanyl-sn-glycerol 1-phospholipid + 8 A = a 2,3-bis-O-(geranylgeranyl)-sn-glycerol 1-phospholipid + 8 AH2. It catalyses the reaction 2,3-bis-O-(phytanyl)-sn-glycerol 1-phosphate + 8 A = 2,3-bis-O-(geranylgeranyl)-sn-glycerol 1-phosphate + 8 AH2. The catalysed reaction is CDP-2,3-bis-O-(geranylgeranyl)-sn-glycerol + 8 AH2 = CDP-2,3-bis-O-(phytanyl)-sn-glycerol + 8 A. It carries out the reaction archaetidylserine + 8 AH2 = 2,3-bis-O-phytanyl-sn-glycero-3-phospho-L-serine + 8 A. It participates in membrane lipid metabolism; glycerophospholipid metabolism. Its function is as follows. Is involved in the reduction of 2,3-digeranylgeranylglycerophospholipids (unsaturated archaeols) into 2,3-diphytanylglycerophospholipids (saturated archaeols) in the biosynthesis of archaeal membrane lipids. Can fully reduce the unsaturated isoprenoid side chains of membrane phospholipids and glycolipids. Is also able to reduce the omega-position isoprene of dolichol phosphate. This is Digeranylgeranylglycerophospholipid reductase from Haloferax volcanii (strain ATCC 29605 / DSM 3757 / JCM 8879 / NBRC 14742 / NCIMB 2012 / VKM B-1768 / DS2) (Halobacterium volcanii).